The following is a 229-amino-acid chain: 2,3-bisphosphoglycerate-dependent phosphoglycerate mutase 2 (229 aa).

Residues 8-15, 21-22, Arg60, 87-90, Lys98, 114-115, and 183-184 contribute to the substrate site; these read RHGQSEWN, TG, ERHY, RR, and GN. His9 acts as the Tele-phosphohistidine intermediate in catalysis. Glu87 (proton donor/acceptor) is an active-site residue.

This sequence belongs to the phosphoglycerate mutase family. BPG-dependent PGAM subfamily.

It catalyses the reaction (2R)-2-phosphoglycerate = (2R)-3-phosphoglycerate. It participates in carbohydrate degradation; glycolysis; pyruvate from D-glyceraldehyde 3-phosphate: step 3/5. Catalyzes the interconversion of 2-phosphoglycerate and 3-phosphoglycerate. The sequence is that of 2,3-bisphosphoglycerate-dependent phosphoglycerate mutase 2 from Latilactobacillus sakei subsp. sakei (strain 23K) (Lactobacillus sakei subsp. sakei).